Here is a 602-residue protein sequence, read N- to C-terminus: MFRSCLRHCRRATVRSRTCPRCSHHEIPQLQVVQRQISLSSSFPHIRRLQTSSTDTQERIPIRKQLKQEAKAIKSRKRERREQEEASRHKWELTVGVEIHAQLNTETKLFSRAPTSPSELPNTNVALFDLAFPGSQPEFQVATLLPALRAAIALNCDIQPVSRFDRKHYFYQDQPSGYQITQYYEPFARNGYLDLFRHDGIAPEDGDRVRIGIKQIQLEQDTAKSQEYPPSMQLLDFNRVSHPLIEIITMPEIHTPATAAAFVRKVQAILQSCSAVTTGMEAGGLRADINVSVRLRGDGSGTHQYSGIGGLGQRTEIKNLSSFKAVEDAIIAEKNRQIAVLESGGVVEGETRGWTIGSTETRKLRGKEGEVDYRYMPDPDIPPLLIGKDIISALSNTLPAGPDALIDMLVGQYGLAIEDAKPLVELEDGARLEYYQDVVDILRNLQQDLDSKTQAGLGRVAGNWVLHELGGLLSKAGLAWDAERVTAESLAALIDQLQRKRITGATAKKVLAMLFDGDRRPVAQLLEEENLILRPLSREEYIALASAAIELNPQMVEQIRSKNQLGKLGWFVGQMMRMGEKGRVEAQKADAILRELILGLSQ.

Residues 1-56 constitute a mitochondrion transit peptide; sequence MFRSCLRHCRRATVRSRTCPRCSHHEIPQLQVVQRQISLSSSFPHIRRLQTSSTDT.

This sequence belongs to the GatB/GatE family. GatB subfamily. Subunit of the heterotrimeric GatCAB amidotransferase (AdT) complex, composed of A, B and C subunits.

It localises to the mitochondrion. The catalysed reaction is L-glutamyl-tRNA(Gln) + L-glutamine + ATP + H2O = L-glutaminyl-tRNA(Gln) + L-glutamate + ADP + phosphate + H(+). Allows the formation of correctly charged Gln-tRNA(Gln) through the transamidation of misacylated Glu-tRNA(Gln) in the mitochondria. The reaction takes place in the presence of glutamine and ATP through an activated gamma-phospho-Glu-tRNA(Gln). The polypeptide is Glutamyl-tRNA(Gln) amidotransferase subunit B, mitochondrial (nempA) (Emericella nidulans (strain FGSC A4 / ATCC 38163 / CBS 112.46 / NRRL 194 / M139) (Aspergillus nidulans)).